Reading from the N-terminus, the 364-residue chain is DNA replication and repair protein RecF (364 aa).

Position 30–37 (30–37) interacts with ATP; that stretch reads GANGSGKT.

It belongs to the RecF family.

It localises to the cytoplasm. In terms of biological role, the RecF protein is involved in DNA metabolism; it is required for DNA replication and normal SOS inducibility. RecF binds preferentially to single-stranded, linear DNA. It also seems to bind ATP. This is DNA replication and repair protein RecF from Sodalis glossinidius.